A 140-amino-acid chain; its full sequence is Small ribosomal subunit protein uS19 (140 aa).

This sequence belongs to the universal ribosomal protein uS19 family.

In terms of biological role, protein S19 forms a complex with S13 that binds strongly to the 16S ribosomal RNA. The polypeptide is Small ribosomal subunit protein uS19 (Sulfolobus acidocaldarius (strain ATCC 33909 / DSM 639 / JCM 8929 / NBRC 15157 / NCIMB 11770)).